Reading from the N-terminus, the 270-residue chain is Cytochrome c oxidase subunit 3 (270 aa).

A run of 7 helical transmembrane segments spans residues 22–42 (PWPI…GLTM), 46–66 (IGEM…GVLW), 88–108 (INIG…ALFW), 128–148 (VGIT…ILLA), 168–188 (SLSG…CQYI), 205–225 (VFFA…IMLA), and 248–268 (IIYL…FYWW).

It belongs to the cytochrome c oxidase subunit 3 family. As to quaternary structure, component of the cytochrome c oxidase (complex IV, CIV), a multisubunit enzyme composed of a catalytic core of 3 subunits and several supernumerary subunits. The complex exists as a monomer or a dimer and forms supercomplexes (SCs) in the inner mitochondrial membrane with ubiquinol-cytochrome c oxidoreductase (cytochrome b-c1 complex, complex III, CIII).

Its subcellular location is the mitochondrion inner membrane. The catalysed reaction is 4 Fe(II)-[cytochrome c] + O2 + 8 H(+)(in) = 4 Fe(III)-[cytochrome c] + 2 H2O + 4 H(+)(out). Component of the cytochrome c oxidase, the last enzyme in the mitochondrial electron transport chain which drives oxidative phosphorylation. The respiratory chain contains 3 multisubunit complexes succinate dehydrogenase (complex II, CII), ubiquinol-cytochrome c oxidoreductase (cytochrome b-c1 complex, complex III, CIII) and cytochrome c oxidase (complex IV, CIV), that cooperate to transfer electrons derived from NADH and succinate to molecular oxygen, creating an electrochemical gradient over the inner membrane that drives transmembrane transport and the ATP synthase. Cytochrome c oxidase is the component of the respiratory chain that catalyzes the reduction of oxygen to water. Electrons originating from reduced cytochrome c in the intermembrane space (IMS) are transferred via the dinuclear copper A center (CU(A)) of subunit 2 and heme A of subunit 1 to the active site in subunit 1, a binuclear center (BNC) formed by heme A3 and copper B (CU(B)). The BNC reduces molecular oxygen to 2 water molecules using 4 electrons from cytochrome c in the IMS and 4 protons from the mitochondrial matrix. This Vanderwaltozyma polyspora (strain ATCC 22028 / DSM 70294 / BCRC 21397 / CBS 2163 / NBRC 10782 / NRRL Y-8283 / UCD 57-17) (Kluyveromyces polysporus) protein is Cytochrome c oxidase subunit 3 (COX3).